We begin with the raw amino-acid sequence, 636 residues long: 1-deoxy-D-xylulose-5-phosphate synthase (636 aa).

Residues histidine 74 and 115 to 117 (GHS) each bind thiamine diphosphate. Aspartate 146 is a Mg(2+) binding site. Thiamine diphosphate contacts are provided by residues 147 to 148 (GA), asparagine 175, tyrosine 286, and glutamate 367. Asparagine 175 is a binding site for Mg(2+).

It belongs to the transketolase family. DXPS subfamily. As to quaternary structure, homodimer. It depends on Mg(2+) as a cofactor. Thiamine diphosphate is required as a cofactor.

It carries out the reaction D-glyceraldehyde 3-phosphate + pyruvate + H(+) = 1-deoxy-D-xylulose 5-phosphate + CO2. It functions in the pathway metabolic intermediate biosynthesis; 1-deoxy-D-xylulose 5-phosphate biosynthesis; 1-deoxy-D-xylulose 5-phosphate from D-glyceraldehyde 3-phosphate and pyruvate: step 1/1. Functionally, catalyzes the acyloin condensation reaction between C atoms 2 and 3 of pyruvate and glyceraldehyde 3-phosphate to yield 1-deoxy-D-xylulose-5-phosphate (DXP). This Halothermothrix orenii (strain H 168 / OCM 544 / DSM 9562) protein is 1-deoxy-D-xylulose-5-phosphate synthase.